Consider the following 253-residue polypeptide: Small ribosomal subunit protein uS2 (253 aa).

Ser2 is subject to N-acetylserine. Positions 212 to 253 (QQAAEEAAAGEEDDEAKEEVAAEEQTEAADWAEGQSEEVASW) are disordered. The segment covering 219–238 (AAGEEDDEAKEEVAAEEQTE) has biased composition (acidic residues).

The protein belongs to the universal ribosomal protein uS2 family. Component of the small ribosomal subunit. Mature ribosomes consist of a small (40S) and a large (60S) subunit. The 40S subunit contains about 33 different proteins and 1 molecule of RNA (18S). The 60S subunit contains about 49 different proteins and 3 molecules of RNA (25S, 5.8S and 5S). Interacts with RPS21.

The protein resides in the cytoplasm. In terms of biological role, required for the assembly and/or stability of the 40S ribosomal subunit. Required for the processing of the 20S rRNA-precursor to mature 18S rRNA in a late step of the maturation of 40S ribosomal subunits. The protein is Small ribosomal subunit protein uS2 of Eremothecium gossypii (strain ATCC 10895 / CBS 109.51 / FGSC 9923 / NRRL Y-1056) (Yeast).